We begin with the raw amino-acid sequence, 58 residues long: Ikitoxin (58 aa).

The LCN-type CS-alpha/beta domain occupies 3–58; it reads VPGNYPLDKDGNTYKCFLLGENEECLNVCKLHGVQYGYCYASKCWCEYLEDDKDSV. 3 disulfides stabilise this stretch: C18/C41, C27/C46, and C31/C48.

Expressed by the venom gland.

The protein resides in the secreted. Beta toxins bind voltage-independently at site-4 of sodium channels (Nav) and shift the voltage of activation toward more negative potentials thereby affecting sodium channel activation and promoting spontaneous and repetitive firing. Does not produce effect when administered to blowfly and cabbage looper larvae. In mice, does not produce convulsions, tremors, increased ventilation nor death. In Parabuthus transvaalicus (Transvaal thick-tailed scorpion), this protein is Ikitoxin.